We begin with the raw amino-acid sequence, 258 residues long: SLA class II histocompatibility antigen, DQ haplotype D beta chain (258 aa).

Residues 1-31 form the signal peptide; the sequence is MVALRLPRGLWTAALTVMLVVLGAPVAEGRD. A beta-1 region spans residues 32–123; the sequence is SPQDFVVQFK…IEEGTTLQRR (92 aa). The Extracellular segment spans residues 32-227; it reads SPQDFVVQFK…RAQSESAQSK (196 aa). 2 disulfides stabilise this stretch: Cys-44-Cys-108 and Cys-146-Cys-202. N-linked (GlcNAc...) asparagine glycosylation occurs at Asn-48. A beta-2 region spans residues 124 to 217; the sequence is VQPTVTISPS…SLQSPILVEW (94 aa). The 105-residue stretch at 126–230 folds into the Ig-like C1-type domain; the sequence is PTVTISPSKA…SESAQSKMLS (105 aa). Residues 218–227 form a connecting peptide region; sequence RAQSESAQSK. The helical transmembrane segment at 228 to 248 threads the bilayer; sequence MLSGVGGFVLGLIFLGLGLFI. At 249–258 the chain is on the cytoplasmic side; that stretch reads RHRSQKGLVR.

Belongs to the MHC class II family.

The protein resides in the membrane. This Sus scrofa (Pig) protein is SLA class II histocompatibility antigen, DQ haplotype D beta chain.